A 439-amino-acid chain; its full sequence is Ribosomal protein uS12 methylthiotransferase RimO (439 aa).

The 116-residue stretch at 3–118 (KKFYITTLGC…AGKILREKFP (116 aa)) folds into the MTTase N-terminal domain. [4Fe-4S] cluster contacts are provided by Cys-12, Cys-48, Cys-81, Cys-157, Cys-161, and Cys-164. Positions 143–370 (NYSKPYAYVK…RDVHLAILEE (228 aa)) constitute a Radical SAM core domain. One can recognise a TRAM domain in the interval 373–438 (ESRIGQTYDA…EYDMNGTWIS (66 aa)).

It belongs to the methylthiotransferase family. RimO subfamily. [4Fe-4S] cluster is required as a cofactor.

Its subcellular location is the cytoplasm. The enzyme catalyses L-aspartate(89)-[ribosomal protein uS12]-hydrogen + (sulfur carrier)-SH + AH2 + 2 S-adenosyl-L-methionine = 3-methylsulfanyl-L-aspartate(89)-[ribosomal protein uS12]-hydrogen + (sulfur carrier)-H + 5'-deoxyadenosine + L-methionine + A + S-adenosyl-L-homocysteine + 2 H(+). In terms of biological role, catalyzes the methylthiolation of an aspartic acid residue of ribosomal protein uS12. The chain is Ribosomal protein uS12 methylthiotransferase RimO from Leptospira borgpetersenii serovar Hardjo-bovis (strain L550).